A 564-amino-acid chain; its full sequence is Alpha-amylase 3 (564 aa).

Positions 1 to 21 are cleaved as a signal peptide; it reads MFGVYFVLLFLSSALIHVANA. Cys51 and Cys59 are joined by a disulfide. Residues Asn56 and Trp105 each contribute to the substrate site. Asn143 contributes to the Ca(2+) binding site. An intrachain disulfide couples Cys172 to Cys188. N-linked (GlcNAc...) asparagine glycosylation is present at Asn181. Position 198 (Asp198) interacts with Ca(2+). Arg227 is a binding site for substrate. Asp229 provides a ligand contact to Ca(2+). Asp229 serves as the catalytic Nucleophile. 232-233 is a substrate binding site; sequence KM. A glycan (N-linked (GlcNAc...) asparagine) is linked at Asn235. Residue Glu253 participates in Ca(2+) binding. Residue Glu253 is the Proton donor of the active site. Cys263 and Cys306 are oxidised to a cystine. N-linked (GlcNAc...) asparagine glycans are attached at residues Asn282 and Asn305. Positions 322 and 369 each coordinate substrate. N-linked (GlcNAc...) asparagine glycosylation is found at Asn438, Asn447, and Asn498. Residue Ser538 is the site of GPI-anchor amidated serine attachment. Residues 539–564 constitute a propeptide, removed in mature form; that stretch reads SSRLILSFKTLVFGLGVTAMLFVLFF.

This sequence belongs to the glycosyl hydrolase 13 family. It depends on Ca(2+) as a cofactor. N-glycosylated.

The protein resides in the cell membrane. The catalysed reaction is Endohydrolysis of (1-&gt;4)-alpha-D-glucosidic linkages in polysaccharides containing three or more (1-&gt;4)-alpha-linked D-glucose units.. Functionally, has a role in cell wall biosynthesis where it is involved in maintaining cell wall strength and shape. The sequence is that of Alpha-amylase 3 (aah3) from Schizosaccharomyces pombe (strain 972 / ATCC 24843) (Fission yeast).